Reading from the N-terminus, the 216-residue chain is UPF0301 protein BBta_6966 (216 aa).

It belongs to the UPF0301 (AlgH) family.

The protein is UPF0301 protein BBta_6966 of Bradyrhizobium sp. (strain BTAi1 / ATCC BAA-1182).